The sequence spans 546 residues: Chaperonin GroEL (546 aa).

Residues 30–33, Lys-51, 87–91, Gly-415, 479–481, and Asp-495 each bind ATP; these read TLGP, DGTTT, and NAA. The tract at residues 526-546 is disordered; the sequence is KEEKPDLSGAGAGMGGMGGMM. The span at 535–546 shows a compositional bias: gly residues; sequence AGAGMGGMGGMM.

This sequence belongs to the chaperonin (HSP60) family. In terms of assembly, forms a cylinder of 14 subunits composed of two heptameric rings stacked back-to-back. Interacts with the co-chaperonin GroES.

Its subcellular location is the cytoplasm. It catalyses the reaction ATP + H2O + a folded polypeptide = ADP + phosphate + an unfolded polypeptide.. In terms of biological role, together with its co-chaperonin GroES, plays an essential role in assisting protein folding. The GroEL-GroES system forms a nano-cage that allows encapsulation of the non-native substrate proteins and provides a physical environment optimized to promote and accelerate protein folding. In Wigglesworthia glossinidia brevipalpis, this protein is Chaperonin GroEL.